Consider the following 156-residue polypeptide: Endogenous retrovirus group K member 25 Pro protein (156 aa).

The Peptidase A2 domain maps to 21 to 96 (FEGLVDTGAD…IPLNLWGRDL (76 aa)). Residue aspartate 26 is part of the active site. The G-patch domain occupies 111–156 (YSPTSQKIMTKMGYIPGKGLGKNEDGIKIPVEAKINQKREGIGYPF).

It belongs to the peptidase A2 family. HERV class-II K(HML-2) subfamily. Active as a homodimer. In terms of processing, autoproteolytically processed at the N-terminus. Expected C-terminal autoprocessing not detected. The sequence shown is that of the processed Pro protein.

It carries out the reaction Processing at the authentic HIV-1 PR recognition site and release of the mature p17 matrix and the p24 capsid protein, as a result of the cleavage of the -SQNY-|-PIVQ- cleavage site.. In terms of biological role, retroviral proteases have roles in processing of the primary translation products and the maturation of the viral particle. Endogenous Pro proteins may have kept, lost or modified their original function during evolution. This endogenous protein has retained most of the characteristics of retroviral proteases. This chain is Endogenous retrovirus group K member 25 Pro protein (ERVK-25), found in Homo sapiens (Human).